The primary structure comprises 485 residues: tRNA-2-methylthio-N(6)-dimethylallyladenosine synthase (485 aa).

Positions glycine 37–glutamate 154 constitute an MTTase N-terminal domain. [4Fe-4S] cluster contacts are provided by cysteine 46, cysteine 83, cysteine 117, cysteine 191, cysteine 195, and cysteine 198. Residues arginine 177–serine 416 enclose the Radical SAM core domain. Residues glutamine 417–leucine 480 enclose the TRAM domain.

It belongs to the methylthiotransferase family. MiaB subfamily. As to quaternary structure, monomer. The cofactor is [4Fe-4S] cluster.

Its subcellular location is the cytoplasm. The catalysed reaction is N(6)-dimethylallyladenosine(37) in tRNA + (sulfur carrier)-SH + AH2 + 2 S-adenosyl-L-methionine = 2-methylsulfanyl-N(6)-dimethylallyladenosine(37) in tRNA + (sulfur carrier)-H + 5'-deoxyadenosine + L-methionine + A + S-adenosyl-L-homocysteine + 2 H(+). In terms of biological role, catalyzes the methylthiolation of N6-(dimethylallyl)adenosine (i(6)A), leading to the formation of 2-methylthio-N6-(dimethylallyl)adenosine (ms(2)i(6)A) at position 37 in tRNAs that read codons beginning with uridine. This chain is tRNA-2-methylthio-N(6)-dimethylallyladenosine synthase, found in Xanthomonas campestris pv. campestris (strain 8004).